The primary structure comprises 246 residues: Submandibular gland secretory Glx-rich protein CA (246 aa).

An N-terminal signal peptide occupies residues 1 to 18 (MLVVLLTAALLALSSAQG). The interval 14–223 (SSAQGTDEEV…SGRPKKPLLP (210 aa)) is disordered. Composition is skewed to low complexity over residues 39 to 50 (PVDSGSDPPSAD), 58 to 71 (EGES…EPPA), 81 to 93 (QQEP…QEPP), 104 to 116 (QQEP…QEPP), 127 to 141 (QQEP…PPAT), 150 to 159 (QQESTQAENQ), and 178 to 196 (VESP…QQTN). 5 consecutive repeat copies span residues 67–89 (EEPP…QAEN), 90–112 (QEPP…QAEN), 113–135 (QEPP…QAED), 136–158 (QQPP…QAEN), and 159–181 (QEPS…VESP). A 5 X 23 AA tandem repeats region spans residues 67–181 (EEPPATSGSE…QPEEGNVESP (115 aa)). Basic and acidic residues predominate over residues 197 to 216 (PEEKPPAPKTQEEPQHDSGR).

Submandibular gland acinar cells.

It is found in the secreted. GRP proteins have a marked affinity for hydroxyapatite. They may play a role in the formation of the protective acquired pellicle at the saliva-tooth interface. In Rattus norvegicus (Rat), this protein is Submandibular gland secretory Glx-rich protein CA (Grpca).